The primary structure comprises 328 residues: MEQDNGTIQAPGLPPTTCVYREDFKRLLLTPVYSVVLVVGLPLNICVIAQICASRRTLTRSAVYTLNLALADLMYACSLPLLIYNYARGDHWPFGDLACRFVRFLFYANLHGSILFLTCISFQRYLGICHPLASWHKRGGRRAAWVVCGVVWLAVTAQCLPTAVFAATGIQRNRTVCYDLSPPILSTRYLPYGMALTVIGFLLPFIALLACYCRMARRLCRQDGPAGPVAQERRSKAARMAVVVAAVFAISFLPFHITKTAYLAVRSTPGVSCPVLETFAAAYKGTRPFASVNSVLDPILFYFTQQKFRRQPHDLLQRLTAKWQRQRV.

Over 1 to 27 the chain is Extracellular; sequence MEQDNGTIQAPGLPPTTCVYREDFKRL. N-linked (GlcNAc...) asparagine glycosylation is present at N5. The helical transmembrane segment at 28–48 threads the bilayer; it reads LLTPVYSVVLVVGLPLNICVI. The Cytoplasmic segment spans residues 49 to 62; it reads AQICASRRTLTRSA. A helical membrane pass occupies residues 63–83; the sequence is VYTLNLALADLMYACSLPLLI. Over 84 to 101 the chain is Extracellular; that stretch reads YNYARGDHWPFGDLACRF. C99 and C177 are disulfide-bonded. A helical membrane pass occupies residues 102–122; that stretch reads VRFLFYANLHGSILFLTCISF. At 123–144 the chain is on the cytoplasmic side; sequence QRYLGICHPLASWHKRGGRRAA. A helical membrane pass occupies residues 145–165; the sequence is WVVCGVVWLAVTAQCLPTAVF. Residues 166–194 are Extracellular-facing; the sequence is AATGIQRNRTVCYDLSPPILSTRYLPYGM. The N-linked (GlcNAc...) asparagine glycan is linked to N173. A helical transmembrane segment spans residues 195–215; that stretch reads ALTVIGFLLPFIALLACYCRM. Residues 216–236 are Cytoplasmic-facing; it reads ARRLCRQDGPAGPVAQERRSK. The helical transmembrane segment at 237–257 threads the bilayer; the sequence is AARMAVVVAAVFAISFLPFHI. Residues 258–280 lie on the Extracellular side of the membrane; sequence TKTAYLAVRSTPGVSCPVLETFA. A helical membrane pass occupies residues 281-303; sequence AAYKGTRPFASVNSVLDPILFYF. Residues 304–328 are Cytoplasmic-facing; sequence TQQKFRRQPHDLLQRLTAKWQRQRV.

The protein belongs to the G-protein coupled receptor 1 family.

The protein resides in the cell membrane. In terms of biological role, receptor for extracellular UTP &gt; ADP = 2-methylthio-ATP &gt; ADP-beta-S &gt; ATP = ATP-gamma-S. The activity of this receptor is mediated by G proteins which activate a phosphatidylinositol-calcium second messenger system. Functionally coupled to phospholipase C. This Mus musculus (Mouse) protein is P2Y purinoceptor 6 (P2ry6).